The chain runs to 140 residues: UPF0102 protein ACIAD1132 (140 aa).

The protein belongs to the UPF0102 family.

The chain is UPF0102 protein ACIAD1132 from Acinetobacter baylyi (strain ATCC 33305 / BD413 / ADP1).